An 87-amino-acid polypeptide reads, in one-letter code: Large ribosomal subunit protein bL27 (87 aa).

A disordered region spans residues Met-1–Leu-21.

This sequence belongs to the bacterial ribosomal protein bL27 family.

The chain is Large ribosomal subunit protein bL27 from Paraburkholderia phytofirmans (strain DSM 17436 / LMG 22146 / PsJN) (Burkholderia phytofirmans).